Consider the following 807-residue polypeptide: Potassium transporter 9 (807 aa).

Residues 1-59 lie on the Cytoplasmic side of the membrane; the sequence is MAERVEASSVPEGENTIEEREVGAMWELEQKLDQPMDEEANKLNNMYREKGLSMLMLLR. The chain crosses the membrane as a helical span at residues 60–80; sequence LSFQSLGIVYGDLGTSPLYVF. At 81 to 96 the chain is on the extracellular side; it reads YNTFPDGIDDSEDVIG. Residues 97–117 form a helical membrane-spanning segment; that stretch reads ALSLIIYSLLLIPLIKYVFIV. Residues 118–185 are Cytoplasmic-facing; sequence CKANDNGQGG…EGKEWRKRAL (68 aa). A helical membrane pass occupies residues 186 to 206; the sequence is LVVVLLGTCMMIGDGILTPAI. The Extracellular segment spans residues 207 to 225; it reads SVLSATGGIKVNNPKMSGD. Residues 226–246 form a helical membrane-spanning segment; the sequence is IVVLVAIVILIGLFSMQHYGT. The Cytoplasmic portion of the chain corresponds to 247–248; the sequence is DK. The helical transmembrane segment at 249 to 269 threads the bilayer; that stretch reads VGWLFAPIVLIWFLFIGATGM. The Extracellular portion of the chain corresponds to 270–299; sequence YNICKYDTSVLKAFSPTYIYLYFKRRGRDG. Residues 300 to 320 form a helical membrane-spanning segment; the sequence is WISLGGILLSITGTEALYADI. The Cytoplasmic segment spans residues 321–322; it reads AY. Residues 323–343 traverse the membrane as a helical segment; it reads FPLLAIQLAFTFFVFPCLLLA. Residues 344–369 are Extracellular-facing; that stretch reads YCGQAAYLVIHKEHYQDAFYASIPDS. Residues 370-390 traverse the membrane as a helical segment; it reads VYWPMFIVATGAAIVGSQATI. Residues 391-417 are Cytoplasmic-facing; sequence SGTYSIVKQAVAHGCFPRVKIVHTSKK. Residues 418–438 traverse the membrane as a helical segment; it reads FLGQIYCPDINWILMLGCIAV. At 439–454 the chain is on the extracellular side; it reads TASFKKQSQIGNAYGT. Residues 455-475 form a helical membrane-spanning segment; it reads AVVLVMLVTTLLMVLIMLLVW. Residues 476-481 are Cytoplasmic-facing; it reads HCHWIL. Residues 482-502 traverse the membrane as a helical segment; it reads VLIFTFLSFFVELSYFSAVIF. At 503-507 the chain is on the extracellular side; that stretch reads KIDEG. Residues 508-528 traverse the membrane as a helical segment; it reads GWVPLIIAAISLLVMSVWHYA. The Cytoplasmic segment spans residues 529-807; that stretch reads TVKKYEFEMH…LLNVGQVFYV (279 aa).

This sequence belongs to the HAK/KUP transporter (TC 2.A.72.3) family.

The protein resides in the cell membrane. In terms of biological role, putative potassium transporter. The protein is Potassium transporter 9 (POT9) of Arabidopsis thaliana (Mouse-ear cress).